Here is a 489-residue protein sequence, read N- to C-terminus: UDP-N-acetylmuramoylalanine--D-glutamate ligase (489 aa).

126–132 (GTNGKTT) is a binding site for ATP.

Belongs to the MurCDEF family.

The protein localises to the cytoplasm. It carries out the reaction UDP-N-acetyl-alpha-D-muramoyl-L-alanine + D-glutamate + ATP = UDP-N-acetyl-alpha-D-muramoyl-L-alanyl-D-glutamate + ADP + phosphate + H(+). It participates in cell wall biogenesis; peptidoglycan biosynthesis. Functionally, cell wall formation. Catalyzes the addition of glutamate to the nucleotide precursor UDP-N-acetylmuramoyl-L-alanine (UMA). This chain is UDP-N-acetylmuramoylalanine--D-glutamate ligase, found in Mycolicibacterium paratuberculosis (strain ATCC BAA-968 / K-10) (Mycobacterium paratuberculosis).